A 284-amino-acid chain; its full sequence is Pantothenate synthetase (284 aa).

An ATP-binding site is contributed by 30-37 (MGNLHDGH). The active-site Proton donor is the His37. A (R)-pantoate-binding site is contributed by Gln61. Beta-alanine is bound at residue Gln61. 149–152 (GEKD) is a binding site for ATP. Gln155 contributes to the (R)-pantoate binding site. Residues Val178 and 186–189 (LSSR) contribute to the ATP site.

The protein belongs to the pantothenate synthetase family. Homodimer.

It is found in the cytoplasm. It catalyses the reaction (R)-pantoate + beta-alanine + ATP = (R)-pantothenate + AMP + diphosphate + H(+). The protein operates within cofactor biosynthesis; (R)-pantothenate biosynthesis; (R)-pantothenate from (R)-pantoate and beta-alanine: step 1/1. Its function is as follows. Catalyzes the condensation of pantoate with beta-alanine in an ATP-dependent reaction via a pantoyl-adenylate intermediate. The protein is Pantothenate synthetase of Cronobacter sakazakii (strain ATCC BAA-894) (Enterobacter sakazakii).